The following is a 592-amino-acid chain: Protein US23 (592 aa).

The interval 407-491 is disordered; it reads PRSLGDGEEE…NNVVPNVDRR (85 aa). Over residues 460–481 the composition is skewed to acidic residues; the sequence is ADDEEQGEDDDDSGAEPMEPEE.

Belongs to the herpesviridae US22 family.

It localises to the virion tegument. The polypeptide is Protein US23 (US23) (Homo sapiens (Human)).